Consider the following 313-residue polypeptide: MSQSRHRAAAPPMEREDSGTFSLGKMITAKPGKTPIQVLHEYGMKTKNIPVYECERSDVQIHVPTFTFRVTVGDITCTGEGTSKKLAKHRAAEAAINILKANASICFAVPDPLMPDPSKQPKNQLNPIGSLQELAIHHGWRLPEYTLSQEGGPAHKREYTTICRLESFMETGKGASKKQAKRNAAEKFLAKFSNISPENHISLTNMVGHSLGCTWHSLRNSPGEKINLLKRSLLSIPNTDYIQLLSEIAKEQGFNITYLDIEELSANGQYQCLAELSTSPITVCHGSGISCSSAQSDAAHNALQYLKIIAERK.

The disordered stretch occupies residues 1-21 (MSQSRHRAAAPPMEREDSGTF). Sufficient for self-association and interaction with TARBP2 regions lie at residues 1 to 103 (MSQS…KANA), 102 to 195 (NASI…FSNI), and 195 to 313 (ISPE…AERK). Phosphoserine is present on Ser18. 3 consecutive DRBM domains span residues 34–101 (TPIQ…ILKA), 126–194 (NPIG…KFSN), and 240–308 (DYIQ…YLKI). Phosphoserine is present on residues Ser167, Ser246, and Ser287.

Belongs to the PRKRA family. Homodimer. Interacts with EIF2AK2/PKR through its DRBM domains. Interacts with DICER1, AGO2 and TARBP2. Also able to interact with dsRNA. Interacts with UBC9. Forms a complex with UBC9 and p53/TP53. Interacts with DUS2L (via DRBM domain). In terms of processing, phosphorylated at Ser-246 in unstressed cells and at Ser-287 in stressed cells. Phosphorylation at Ser-246 appears to be a prerequisite for subsequent phosphorylation at Ser-287. Phosphorylation at Ser-246 and Ser-287 are necessary for activation of EIF2AK2/PKR under conditions of stress.

The protein resides in the cytoplasm. The protein localises to the perinuclear region. Functionally, activates EIF2AK2/PKR in the absence of double-stranded RNA (dsRNA), leading to phosphorylation of EIF2S1/EFI2-alpha and inhibition of translation and induction of apoptosis. Required for siRNA production by DICER1 and for subsequent siRNA-mediated post-transcriptional gene silencing. Does not seem to be required for processing of pre-miRNA to miRNA by DICER1. Promotes UBC9-p53/TP53 association and sumoylation and phosphorylation of p53/TP53 at 'Lys-386' at 'Ser-392' respectively and enhances its activity in a EIF2AK2/PKR-dependent manner. In Bos taurus (Bovine), this protein is Interferon-inducible double-stranded RNA-dependent protein kinase activator A (PRKRA).